The following is a 532-amino-acid chain: Maternal protein exuperantia (532 aa).

Disordered stretches follow at residues 206 to 251 (CSAS…NAVQ) and 403 to 491 (TVKP…NGLK). Low complexity-rich tracts occupy residues 220–231 (GSSMVSDSVSIS) and 404–417 (VKPVVKGNSNNNNN). Over residues 454–467 (SVSSLPDSTTKTPS) the composition is skewed to polar residues. Residue serine 467 is modified to Phosphoserine.

In terms of assembly, component of the osk RNP complex, which is composed of at least exuperantia (exu), ypsilon schachtel (yps), aret (bruno), cup, and the mRNA of osk. In the sponge body, forms a ribonucleoprotein complex (RNP) containing at least me31B, exu, yps and the mRNA of osk; interactions with exu and yps are RNA dependent.

The protein resides in the cytoplasm. The protein localises to the cytoplasmic ribonucleoprotein granule. Ensures the proper localization of the mRNA of the bicoid gene to the anterior regions of the oocyte thus playing a fundamental role in the establishment of the polarity of the oocyte. May bind the bcd mRNA. This is Maternal protein exuperantia (exu) from Drosophila melanogaster (Fruit fly).